The chain runs to 245 residues: Thioredoxin-like 1-2, chloroplastic (245 aa).

The N-terminal 92 residues, 1-92, are a transit peptide targeting the chloroplast; the sequence is MDAISSLGTN…TNHNMLEIQS (92 aa). The 102-residue stretch at 93–194 folds into the Thioredoxin domain; the sequence is ANHLVDSLLN…FKKALDKHGS (102 aa). Active-site nucleophile residues include C117 and C120. A disulfide bridge links C117 with C120.

The protein belongs to the thioredoxin family.

The protein resides in the plastid. The protein localises to the chloroplast. Functionally, probable thiol-disulfide oxidoreductase that may participate in various redox reactions. The protein is Thioredoxin-like 1-2, chloroplastic of Arabidopsis thaliana (Mouse-ear cress).